Consider the following 172-residue polypeptide: Large ribosomal subunit protein uL10 (172 aa).

It belongs to the universal ribosomal protein uL10 family. Part of the ribosomal stalk of the 50S ribosomal subunit. The N-terminus interacts with L11 and the large rRNA to form the base of the stalk. The C-terminus forms an elongated spine to which L12 dimers bind in a sequential fashion forming a multimeric L10(L12)X complex.

Functionally, forms part of the ribosomal stalk, playing a central role in the interaction of the ribosome with GTP-bound translation factors. The protein is Large ribosomal subunit protein uL10 of Brucella suis biovar 1 (strain 1330).